A 681-amino-acid chain; its full sequence is Calpain-C (681 aa).

The Calpain catalytic domain occupies 18-331 (LWEDPDFPAV…FSTMEVVYLD (314 aa)). Positions 332-481 (TETSNDEEML…ILGTGSFRLS (150 aa)) are domain III. Positions 482-514 (CLETQTMILLDPFPALKSTDAERCGGPKVKSVC) are linker. Residues 515 to 681 (QYEPVYMQLA…HDWIKSILSC (167 aa)) are domain IV. One can recognise an EF-hand domain in the interval 552 to 587 (ANIDICRQVIALQDRSGSGRITFQQFKTFMVNLKSW). Ca(2+) is bound by residues D565, S567, S569, and R571.

Belongs to the peptidase C2 family. In terms of tissue distribution, localized to the salivary glands in the larva.

Its subcellular location is the cytoplasm. Its function is as follows. Not known; does not seem to have protease activity. This is Calpain-C from Drosophila melanogaster (Fruit fly).